Reading from the N-terminus, the 538-residue chain is Syncytin-2 (538 aa).

A signal peptide spans 1–15; that stretch reads MGLLLLVLILTPLLA. Residues 31 to 478 lie on the Extracellular side of the membrane; that stretch reads LLQSTGSPYS…GWLNWEGTWK (448 aa). Residues 43-46 carry the CXXC motif; that stretch reads CWLC. 3 cysteine pairs are disulfide-bonded: C43/C46, C43/C439, and C431/C438. 8 N-linked (GlcNAc...) asparagine glycosylation sites follow: N133, N146, N177, N220, N241, N247, N312, and N332. The segment at 354-374 is fusion peptide; the sequence is FIPLLAGLGILAGTGTGIAGI. A CKS-17 motif is present at residues 414 to 430; the sequence is LQNRRGLDMLTAAQGGI. Residues 431–439 carry the CX6CC motif; it reads CLALDEKCC. N443 carries N-linked (GlcNAc...) asparagine glycosylation. A helical membrane pass occupies residues 479 to 499; the sequence is WFSWVLPFIGPFVSLLLLLLF. Residues 500–538 lie on the Cytoplasmic side of the membrane; that stretch reads GPCLLNLITQFVSSRLQAIKLQTNLSAGRRPRTIQESPF.

Belongs to the gamma type-C retroviral envelope protein family. HERV class-I FRD env subfamily. As to quaternary structure, the surface and transmembrane proteins form a heterodimer. They are attached by non-covalent interactions or by a labile interchain disulfide bond. Post-translationally, specific enzymatic cleavages in vivo yield the mature SU and TM proteins. The CXXC motif is highly conserved across a broad range of retroviral envelope proteins. It is thought to participate in the formation of a labile disulfide bond possibly with the CX6CC motif present in the transmembrane protein.

The protein resides in the cell membrane. Functionally, this endogenous retroviral envelope protein has retained its original fusogenic properties and participates in trophoblast fusion and the formation of a syncytium during placenta morphogenesis. The interaction with MFSD2A is apparently important for this process. In terms of biological role, endogenous envelope proteins may have kept, lost or modified their original function during evolution and this one is unable to confer infectivity. The polypeptide is Syncytin-2 (ERVFRD-1) (Hylobates moloch (Silvery gibbon)).